The primary structure comprises 218 residues: Kynurenine formamidase (218 aa).

W27 contacts substrate. Residues H57, H61, and D63 each coordinate Zn(2+). Residue H67 is the Proton donor/acceptor of the active site. Positions 169 and 181 each coordinate Zn(2+).

The protein belongs to the Cyclase 1 superfamily. KynB family. As to quaternary structure, homodimer. Zn(2+) serves as cofactor.

It carries out the reaction N-formyl-L-kynurenine + H2O = L-kynurenine + formate + H(+). It participates in amino-acid degradation; L-tryptophan degradation via kynurenine pathway; L-kynurenine from L-tryptophan: step 2/2. Inhibited by EDTA. Insensitive to phenylmethylsulfonyl fluoride (PMSF). In terms of biological role, catalyzes the hydrolysis of N-formyl-L-kynurenine to L-kynurenine, the second step in the kynurenine pathway of tryptophan degradation. The protein is Kynurenine formamidase of Cupriavidus metallidurans (strain ATCC 43123 / DSM 2839 / NBRC 102507 / CH34) (Ralstonia metallidurans).